An 811-amino-acid chain; its full sequence is Probable inorganic carbon transporter subunit DabA (811 aa).

Zn(2+)-binding residues include cysteine 336, aspartate 338, histidine 498, and cysteine 513.

This sequence belongs to the inorganic carbon transporter (TC 9.A.2) DabA family. As to quaternary structure, forms a complex with DabB. Zn(2+) is required as a cofactor.

The protein localises to the cell inner membrane. Part of an energy-coupled inorganic carbon pump. In Rhodospirillum centenum (strain ATCC 51521 / SW), this protein is Probable inorganic carbon transporter subunit DabA.